We begin with the raw amino-acid sequence, 59 residues long: Photosystem II reaction center protein K (59 aa).

A propeptide spanning residues 1 to 22 (MLNIFSLICLNSALHSSSFFFA) is cleaved from the precursor. Residues 38–58 (MPVIPVLFFLLALVWQAAVSF) traverse the membrane as a helical segment.

This sequence belongs to the PsbK family. As to quaternary structure, PSII is composed of 1 copy each of membrane proteins PsbA, PsbB, PsbC, PsbD, PsbE, PsbF, PsbH, PsbI, PsbJ, PsbK, PsbL, PsbM, PsbT, PsbX, PsbY, PsbZ, Psb30/Ycf12, at least 3 peripheral proteins of the oxygen-evolving complex and a large number of cofactors. It forms dimeric complexes.

The protein localises to the plastid. It localises to the chloroplast thylakoid membrane. Its function is as follows. One of the components of the core complex of photosystem II (PSII). PSII is a light-driven water:plastoquinone oxidoreductase that uses light energy to abstract electrons from H(2)O, generating O(2) and a proton gradient subsequently used for ATP formation. It consists of a core antenna complex that captures photons, and an electron transfer chain that converts photonic excitation into a charge separation. The sequence is that of Photosystem II reaction center protein K from Calycanthus floridus var. glaucus (Eastern sweetshrub).